Consider the following 180-residue polypeptide: MNPAPNLVMIGPMGAGKSSIGRRIAKHFNLHFADTDHAIVERAGTSISTIFKYSGEPEFRRLEREVLYDLLNHENRLIATGGGTILDPENRHRMQKRGFVVFLKINVNTQLERLAHDRYRPLLQQIDRKQVLSDLYATRQPLYQKIADMIVTTDHMSPNTATAQLILDLTAHWQKSSNTA.

Position 14-19 (14-19 (GAGKSS)) interacts with ATP. Residue S18 participates in Mg(2+) binding. Substrate is bound by residues D36, R60, and G82. R120 is an ATP binding site. A substrate-binding site is contributed by R139.

It belongs to the shikimate kinase family. Monomer. Mg(2+) serves as cofactor.

It localises to the cytoplasm. The catalysed reaction is shikimate + ATP = 3-phosphoshikimate + ADP + H(+). It functions in the pathway metabolic intermediate biosynthesis; chorismate biosynthesis; chorismate from D-erythrose 4-phosphate and phosphoenolpyruvate: step 5/7. Catalyzes the specific phosphorylation of the 3-hydroxyl group of shikimic acid using ATP as a cosubstrate. The protein is Shikimate kinase of Xylella fastidiosa (strain M23).